The following is a 402-amino-acid chain: UDP-glucose 6-dehydrogenase (402 aa).

Residues 2 to 19 (KIAVAGSGYVGLSLGVLL), V11, D29, K34, T83, T118, and E145 contribute to the NAD(+) site. Substrate is bound by residues 141-145 (EFLRE), K204, N208, 249-253 (YNNPS), and G257. Residue Y259 participates in NAD(+) binding. The active-site Nucleophile is the C260. K263 contacts NAD(+). K320 contributes to the substrate binding site. Position 327 (R327) interacts with NAD(+).

It belongs to the UDP-glucose/GDP-mannose dehydrogenase family.

It carries out the reaction UDP-alpha-D-glucose + 2 NAD(+) + H2O = UDP-alpha-D-glucuronate + 2 NADH + 3 H(+). It functions in the pathway nucleotide-sugar biosynthesis; UDP-alpha-D-glucuronate biosynthesis; UDP-alpha-D-glucuronate from UDP-alpha-D-glucose: step 1/1. Catalyzes the formation of UDP-glucuronic acid which is required for capsular hyaluronic acid synthesis. The sequence is that of UDP-glucose 6-dehydrogenase (hasB) from Streptococcus pyogenes serotype M1.